The sequence spans 277 residues: Bifunctional protein FolD (277 aa).

NADP(+) contacts are provided by residues 159–161 (GRS), Ser184, and Ile225.

The protein belongs to the tetrahydrofolate dehydrogenase/cyclohydrolase family. In terms of assembly, homodimer.

The catalysed reaction is (6R)-5,10-methylene-5,6,7,8-tetrahydrofolate + NADP(+) = (6R)-5,10-methenyltetrahydrofolate + NADPH. It carries out the reaction (6R)-5,10-methenyltetrahydrofolate + H2O = (6R)-10-formyltetrahydrofolate + H(+). The protein operates within one-carbon metabolism; tetrahydrofolate interconversion. In terms of biological role, catalyzes the oxidation of 5,10-methylenetetrahydrofolate to 5,10-methenyltetrahydrofolate and then the hydrolysis of 5,10-methenyltetrahydrofolate to 10-formyltetrahydrofolate. This is Bifunctional protein FolD from Acholeplasma laidlawii (strain PG-8A).